A 692-amino-acid polypeptide reads, in one-letter code: A-type ATP synthase subunit I (692 aa).

The next 7 membrane-spanning stretches (helical) occupy residues 389-409 (GIMLTDAVYGLLLTIIGLFIW), 422-442 (LGYILTLAGISTVIMGIITGG), 494-514 (ILVFSIFVGLIHLLIGLFVGF), 531-551 (GVWILLILSIFVGIGLMFAGA), 553-573 (TMIAGGIIGIFVVLAILASMY), 602-622 (ARLLALCLATGGLAMAVNIMA), and 624-644 (LVGESIPVIGIIVAIIILLVG).

This sequence belongs to the V-ATPase 116 kDa subunit family. The A-type ATPase is composed of subunits A(3), B(3), C, D, E(1 or 2), F, H(2), I and K(x).

Its subcellular location is the cell membrane. Component of the A-type ATP synthase that produces ATP from ADP in the presence of a proton gradient across the membrane. In Methanocaldococcus jannaschii (strain ATCC 43067 / DSM 2661 / JAL-1 / JCM 10045 / NBRC 100440) (Methanococcus jannaschii), this protein is A-type ATP synthase subunit I.